The sequence spans 278 residues: Transmembrane protein 45B (278 aa).

The next 7 helical transmembrane spans lie at 7 to 27 (HALP…KYPL), 49 to 69 (IIEG…EQFV), 95 to 115 (YLFF…FNIV), 117 to 137 (LGLD…LFYF), 149 to 169 (IHSL…LEVI), 183 to 203 (LLIL…PPFG), and 215 to 235 (VMFI…ITAI). A phosphoserine mark is found at S273 and S275.

It belongs to the TMEM45 family.

It is found in the endosome membrane. The protein resides in the lysosome membrane. It localises to the golgi apparatus. Its subcellular location is the trans-Golgi network membrane. In terms of biological role, plays a role in innate immunity. This is Transmembrane protein 45B (Tmem45b) from Rattus norvegicus (Rat).